The following is a 100-amino-acid chain: MLLDFLDQLFSRHSGNSRQQAKQRLKLILAHDRADLTPAALESMRLEILGVVSRYVELDSEGMQFHLATEGGTTALIANLPIRRVKPLETGLSRSEGEKA.

Belongs to the MinE family.

Functionally, prevents the cell division inhibition by proteins MinC and MinD at internal division sites while permitting inhibition at polar sites. This ensures cell division at the proper site by restricting the formation of a division septum at the midpoint of the long axis of the cell. This is Cell division topological specificity factor from Synechococcus sp. (strain JA-2-3B'a(2-13)) (Cyanobacteria bacterium Yellowstone B-Prime).